Consider the following 317-residue polypeptide: Ribose-phosphate pyrophosphokinase (317 aa).

ATP is bound by residues 43-45 (DGE) and 102-103 (RQ). Residues histidine 136 and aspartate 175 each coordinate Mg(2+). Lysine 198 is a catalytic residue. D-ribose 5-phosphate contacts are provided by residues arginine 200, aspartate 224, and 228-232 (DTAGT).

It belongs to the ribose-phosphate pyrophosphokinase family. Class I subfamily. Homohexamer. Mg(2+) serves as cofactor.

Its subcellular location is the cytoplasm. The enzyme catalyses D-ribose 5-phosphate + ATP = 5-phospho-alpha-D-ribose 1-diphosphate + AMP + H(+). It participates in metabolic intermediate biosynthesis; 5-phospho-alpha-D-ribose 1-diphosphate biosynthesis; 5-phospho-alpha-D-ribose 1-diphosphate from D-ribose 5-phosphate (route I): step 1/1. Functionally, involved in the biosynthesis of the central metabolite phospho-alpha-D-ribosyl-1-pyrophosphate (PRPP) via the transfer of pyrophosphoryl group from ATP to 1-hydroxyl of ribose-5-phosphate (Rib-5-P). The sequence is that of Ribose-phosphate pyrophosphokinase from Oceanobacillus iheyensis (strain DSM 14371 / CIP 107618 / JCM 11309 / KCTC 3954 / HTE831).